We begin with the raw amino-acid sequence, 119 residues long: FAD-linked sulfhydryl oxidase (119 aa).

Residues 1-97 (MLHWGPKYWR…ISWSEYKNIY (97 aa)) form the ERV/ALR sulfhydryl oxidase domain. Cysteines 44 and 47 form a disulfide.

The protein belongs to the asfivirus B119L family. Interacts with A151R. FAD serves as cofactor.

It is found in the host cytoplasm. The protein resides in the virion. It carries out the reaction 2 R'C(R)SH + O2 = R'C(R)S-S(R)CR' + H2O2. Its function is as follows. FAD-dependent sulfhydryl oxidase that catalyzes the formation of disulfide bonds in viral proteins produced in the cell cytoplasm. Involved in virion maturation. In African swine fever virus (isolate Warthog/Namibia/Wart80/1980) (ASFV), this protein is FAD-linked sulfhydryl oxidase.